The following is a 350-amino-acid chain: MSTPPSLPATGVPAPHLPRGAAAPALPACLALAGPTASGKTAGALALARALAPHRPVEIVSVDSALVYRGMDIGTAKPTAAEQAAVPHHLIDIRDPLQPYSAAEFVADAQRLVREIQARGALPLLVGGTMLYFKALWDGIDDMPPADAAVRARLEAQAAAEGWPALHAELARVDPQTAARLAPGDSQRIQRALEVWHVSGRPLSSFHTRSRAAGEAAGAARMSMPLFSLEPQDRAWLHGRIAQRFDAMLDEGFVEEVRRLRARGDLHPDLPSMRCVGYRQAWEALYEEARTGRLPLAQLRERGIAATRQLAKRQVTWLRSMPWRHAIACDAPDATQRWVAAALHALGVPA.

34–41 lines the ATP pocket; it reads GPTASGKT. Position 36-41 (36-41) interacts with substrate; that stretch reads TASGKT. Interaction with substrate tRNA regions lie at residues 63–66, 187–191, and 274–279; these read DSAL, QRIQR, and RCVGYR.

Belongs to the IPP transferase family. As to quaternary structure, monomer. Requires Mg(2+) as cofactor.

It carries out the reaction adenosine(37) in tRNA + dimethylallyl diphosphate = N(6)-dimethylallyladenosine(37) in tRNA + diphosphate. In terms of biological role, catalyzes the transfer of a dimethylallyl group onto the adenine at position 37 in tRNAs that read codons beginning with uridine, leading to the formation of N6-(dimethylallyl)adenosine (i(6)A). The polypeptide is tRNA dimethylallyltransferase (Paracidovorax citrulli (strain AAC00-1) (Acidovorax citrulli)).